The following is a 295-amino-acid chain: Excinuclease cho (295 aa).

Residues T33–K108 form the GIY-YIG domain.

In terms of biological role, incises the DNA at the 3' side of a lesion during nucleotide excision repair. Incises the DNA farther away from the lesion than UvrC. Not able to incise the 5' site of a lesion. When a lesion remains because UvrC is not able to induce the 3' incision, Cho incises the DNA. Then UvrC makes the 5' incision. The combined action of Cho and UvrC broadens the substrate range of nucleotide excision repair. This is Excinuclease cho (cho) from Escherichia coli O157:H7.